An 874-amino-acid chain; its full sequence is Probable RNA-directed RNA polymerase (874 aa).

Belongs to the totiviridae RNA-directed RNA polymerase family.

It catalyses the reaction RNA(n) + a ribonucleoside 5'-triphosphate = RNA(n+1) + diphosphate. RNA-dependent RNA polymerase which replicates the viral genome. Catalyzes the transcription of fully conservative plus-strand genomic RNAs that are extruded from the virion into the cytoplasm where they function as mRNAs for translation of viral proteins and also as substrates for encapsidation to form new virions. Once encapsidated, the positive strand is converted to dsRNA by the RNA-directed RNA polymerase. Displays ssRNA-binding activity. The sequence is that of Probable RNA-directed RNA polymerase (ORF3) from Leishmania major (LRV-1-1).